A 631-amino-acid chain; its full sequence is Chaperone protein HtpG (631 aa).

The a; substrate-binding stretch occupies residues 1–338 (MILKEQETLG…CNDLPLNISR (338 aa)). Residues 339 to 554 (EMLQHNRITQ…SNNMTTHMAK (216 aa)) are b. Positions 555–631 (LIVASGQNKP…KLLNHDTIVN (77 aa)) are c.

Belongs to the heat shock protein 90 family. As to quaternary structure, homodimer.

The protein resides in the cytoplasm. In terms of biological role, molecular chaperone. Has ATPase activity. This chain is Chaperone protein HtpG, found in Baumannia cicadellinicola subsp. Homalodisca coagulata.